The following is a 423-amino-acid chain: Maintenance of mitochondrial morphology protein 1 (423 aa).

The Lumenal portion of the chain corresponds to 1–20; the sequence is MTIPAPIPDKAESSLSFTQG. Residues 21–41 traverse the membrane as a helical segment; the sequence is LLLGQLSIVILIGAFIKFFIF. The Cytoplasmic portion of the chain corresponds to 42 to 423; it reads GDPPSPDVTA…PGSMPGLSMT (382 aa). The SMP-LTD domain maps to 115 to 327; it reads QPESLDWFNV…EPRFQQIELP (213 aa). Disordered regions lie at residues 332 to 372 and 387 to 423; these read RKKN…KEVE and SLDVPDEGSEDGLRFRRKSKGRDEYAMPGSMPGLSMT. Basic and acidic residues predominate over residues 355–372; the sequence is RSRDVERDLREEARKEVE.

Belongs to the MMM1 family. Homodimer. Component of the ER-mitochondria encounter structure (ERMES) or MDM complex, composed of MMM1, MDM10, MDM12 and MDM34. An MMM1 homodimer associates with one molecule of MDM12 on each side in a pairwise head-to-tail manner, and the SMP-LTD domains of MMM1 and MDM12 generate a continuous hydrophobic tunnel for phospholipid trafficking.

Its subcellular location is the endoplasmic reticulum membrane. Its function is as follows. Component of the ERMES/MDM complex, which serves as a molecular tether to connect the endoplasmic reticulum (ER) and mitochondria. Components of this complex are involved in the control of mitochondrial shape and protein biogenesis, and function in nonvesicular lipid trafficking between the ER and mitochondria. The MDM12-MMM1 subcomplex functions in the major beta-barrel assembly pathway that is responsible for biogenesis of all outer membrane beta-barrel proteins, and acts in a late step after the SAM complex. The MDM10-MDM12-MMM1 subcomplex further acts in the TOM40-specific pathway after the action of the MDM12-MMM1 complex. Essential for establishing and maintaining the structure of mitochondria and maintenance of mtDNA nucleoids. The protein is Maintenance of mitochondrial morphology protein 1 of Botryotinia fuckeliana (strain B05.10) (Noble rot fungus).